Reading from the N-terminus, the 235-residue chain is Secretory carrier-associated membrane protein 5A (235 aa).

The Cytoplasmic portion of the chain corresponds to 1–39 (MSDKPNNFPPLPRFIPLKPCFYQDFDTDIPDLHRTTAKR). The chain crosses the membrane as a helical span at residues 40–60 (LYYLWMLNSITLGVNLIGCLA). At 61–67 (WLIGGGS) the chain is on the extracellular side. Residues 68–88 (ATNFGLAFLWLILFTPCSYVC) form a helical membrane-spanning segment. Over 89 to 102 (WFRPIYKAFKTDSS) the chain is Cytoplasmic. A helical membrane pass occupies residues 103–125 (FNFMAFFFTFTAQLVISIIQAVG). The Extracellular portion of the chain corresponds to 126 to 148 (IPGWGVCGWIASISFFGTNVGSA). Residues 149–169 (VVMLIPTIMFTAVAVLSFVAL) form a helical membrane-spanning segment. Topologically, residues 170–235 (TKVHRFYRGA…TPNYGYSNEM (66 aa)) are cytoplasmic.

This sequence belongs to the SCAMP family. SCAMP5 subfamily.

The protein localises to the cell membrane. It is found in the golgi apparatus membrane. Its subcellular location is the golgi apparatus. It localises to the trans-Golgi network membrane. The protein resides in the recycling endosome membrane. The protein localises to the cytoplasmic vesicle. It is found in the secretory vesicle. Its subcellular location is the synaptic vesicle membrane. In terms of biological role, required for the calcium-dependent exocytosis of signal sequence-containing cytokines. Probably acts in cooperation with the SNARE machinery. The polypeptide is Secretory carrier-associated membrane protein 5A (scamp5-a) (Xenopus laevis (African clawed frog)).